The sequence spans 233 residues: Uracil-DNA glycosylase (233 aa).

Residue aspartate 70 is the Proton acceptor of the active site.

The protein belongs to the uracil-DNA glycosylase (UDG) superfamily. UNG family.

The protein resides in the cytoplasm. The catalysed reaction is Hydrolyzes single-stranded DNA or mismatched double-stranded DNA and polynucleotides, releasing free uracil.. Functionally, excises uracil residues from the DNA which can arise as a result of misincorporation of dUMP residues by DNA polymerase or due to deamination of cytosine. This is Uracil-DNA glycosylase from Helicobacter pylori (strain G27).